The primary structure comprises 145 residues: Large ribosomal subunit protein uL11 (145 aa).

This sequence belongs to the universal ribosomal protein uL11 family. Part of the ribosomal stalk of the 50S ribosomal subunit. Interacts with L10 and the large rRNA to form the base of the stalk. L10 forms an elongated spine to which L12 dimers bind in a sequential fashion forming a multimeric L10(L12)X complex. Post-translationally, one or more lysine residues are methylated.

Its function is as follows. Forms part of the ribosomal stalk which helps the ribosome interact with GTP-bound translation factors. The protein is Large ribosomal subunit protein uL11 of Corynebacterium glutamicum (strain ATCC 13032 / DSM 20300 / JCM 1318 / BCRC 11384 / CCUG 27702 / LMG 3730 / NBRC 12168 / NCIMB 10025 / NRRL B-2784 / 534).